The primary structure comprises 285 residues: 2-hydroxy-6-oxononadienedioate/2-hydroxy-6-oxononatrienedioate hydrolase 1 (285 aa).

Residue His-265 is the Proton acceptor of the active site.

This sequence belongs to the AB hydrolase superfamily. MhpC family. As to quaternary structure, homodimer.

The enzyme catalyses (2Z,4E)-2-hydroxy-6-oxonona-2,4-dienedioate + H2O = (2Z)-2-hydroxypenta-2,4-dienoate + succinate + H(+). The catalysed reaction is (2Z,4E,7E)-2-hydroxy-6-oxonona-2,4,7-trienedioate + H2O = (2Z)-2-hydroxypenta-2,4-dienoate + fumarate + H(+). The protein operates within aromatic compound metabolism; 3-phenylpropanoate degradation. In terms of biological role, catalyzes the cleavage of the C5-C6 bond of 2-hydroxy-6-oxononadienedioate and 2-hydroxy-6-oxononatrienedioate, a dienol ring fission product of the bacterial meta-cleavage pathway for degradation of phenylpropionic acid. The polypeptide is 2-hydroxy-6-oxononadienedioate/2-hydroxy-6-oxononatrienedioate hydrolase 1 (Pseudomonas putida (Arthrobacter siderocapsulatus)).